The primary structure comprises 65 residues: MPKMKTHRASAKRFKKTANGGLKSASAYTSHRFHGKTKKQRRQLRGTRMMDSTTVKTYAKMLSTL.

Residues M1 to K16 show a composition bias toward basic residues. The disordered stretch occupies residues M1–S24.

This sequence belongs to the bacterial ribosomal protein bL35 family.

The protein is Large ribosomal subunit protein bL35 of Leuconostoc mesenteroides subsp. mesenteroides (strain ATCC 8293 / DSM 20343 / BCRC 11652 / CCM 1803 / JCM 6124 / NCDO 523 / NBRC 100496 / NCIMB 8023 / NCTC 12954 / NRRL B-1118 / 37Y).